A 473-amino-acid chain; its full sequence is 3-isopropylmalate dehydratase large subunit (473 aa).

[4Fe-4S] cluster-binding residues include Cys-351, Cys-414, and Cys-417.

This sequence belongs to the aconitase/IPM isomerase family. LeuC type 1 subfamily. As to quaternary structure, heterodimer of LeuC and LeuD. It depends on [4Fe-4S] cluster as a cofactor.

It catalyses the reaction (2R,3S)-3-isopropylmalate = (2S)-2-isopropylmalate. It functions in the pathway amino-acid biosynthesis; L-leucine biosynthesis; L-leucine from 3-methyl-2-oxobutanoate: step 2/4. Functionally, catalyzes the isomerization between 2-isopropylmalate and 3-isopropylmalate, via the formation of 2-isopropylmaleate. The chain is 3-isopropylmalate dehydratase large subunit from Acidovorax sp. (strain JS42).